The chain runs to 272 residues: Putative pyruvate, phosphate dikinase regulatory protein 2 (272 aa).

Residue 154–161 coordinates ADP; that stretch reads GVSRTSKT.

The protein belongs to the pyruvate, phosphate/water dikinase regulatory protein family. PDRP subfamily.

The catalysed reaction is N(tele)-phospho-L-histidyl/L-threonyl-[pyruvate, phosphate dikinase] + ADP = N(tele)-phospho-L-histidyl/O-phospho-L-threonyl-[pyruvate, phosphate dikinase] + AMP + H(+). The enzyme catalyses N(tele)-phospho-L-histidyl/O-phospho-L-threonyl-[pyruvate, phosphate dikinase] + phosphate + H(+) = N(tele)-phospho-L-histidyl/L-threonyl-[pyruvate, phosphate dikinase] + diphosphate. Its function is as follows. Bifunctional serine/threonine kinase and phosphorylase involved in the regulation of the pyruvate, phosphate dikinase (PPDK) by catalyzing its phosphorylation/dephosphorylation. This chain is Putative pyruvate, phosphate dikinase regulatory protein 2, found in Staphylococcus epidermidis (strain ATCC 35984 / DSM 28319 / BCRC 17069 / CCUG 31568 / BM 3577 / RP62A).